Consider the following 162-residue polypeptide: Sec-independent protein translocase protein TatB (162 aa).

The helical transmembrane segment at 1 to 21 (MFDLGWTELLVIGVVALIVVG) threads the bilayer. Disordered stretches follow at residues 69–111 (ATNP…DRAE) and 124–162 (AADR…ETKA). Basic and acidic residues-rich tracts occupy residues 83–111 (ATRD…DRAE) and 124–141 (AADR…KAEE). The segment covering 144-155 (AALSATPASTAS) has biased composition (low complexity).

The protein belongs to the TatB family. The Tat system comprises two distinct complexes: a TatABC complex, containing multiple copies of TatA, TatB and TatC subunits, and a separate TatA complex, containing only TatA subunits. Substrates initially bind to the TatABC complex, which probably triggers association of the separate TatA complex to form the active translocon.

It is found in the cell inner membrane. Part of the twin-arginine translocation (Tat) system that transports large folded proteins containing a characteristic twin-arginine motif in their signal peptide across membranes. Together with TatC, TatB is part of a receptor directly interacting with Tat signal peptides. TatB may form an oligomeric binding site that transiently accommodates folded Tat precursor proteins before their translocation. In Ruegeria sp. (strain TM1040) (Silicibacter sp.), this protein is Sec-independent protein translocase protein TatB.